The primary structure comprises 167 residues: G/U mismatch-specific DNA glycosylase (167 aa).

The protein belongs to the uracil-DNA glycosylase (UDG) superfamily. TDG/mug family. As to quaternary structure, binds DNA as a monomer.

It is found in the cytoplasm. The enzyme catalyses Specifically hydrolyzes mismatched double-stranded DNA and polynucleotides, releasing free uracil.. In terms of biological role, excises ethenocytosine and uracil, which can arise by alkylation or deamination of cytosine, respectively, from the corresponding mispairs with guanine in ds-DNA. It is capable of hydrolyzing the carbon-nitrogen bond between the sugar-phosphate backbone of the DNA and the mispaired base. The complementary strand guanine functions in substrate recognition. Required for DNA damage lesion repair in stationary-phase cells. This chain is G/U mismatch-specific DNA glycosylase, found in Pectobacterium carotovorum subsp. carotovorum (strain PC1).